Consider the following 538-residue polypeptide: Bifunctional purine biosynthesis protein PurH (538 aa).

In terms of domain architecture, MGS-like spans 8 to 158 (IPAPDKVKIR…KNHAYVTVVT (151 aa)).

Belongs to the PurH family.

It carries out the reaction (6R)-10-formyltetrahydrofolate + 5-amino-1-(5-phospho-beta-D-ribosyl)imidazole-4-carboxamide = 5-formamido-1-(5-phospho-D-ribosyl)imidazole-4-carboxamide + (6S)-5,6,7,8-tetrahydrofolate. It catalyses the reaction IMP + H2O = 5-formamido-1-(5-phospho-D-ribosyl)imidazole-4-carboxamide. It functions in the pathway purine metabolism; IMP biosynthesis via de novo pathway; 5-formamido-1-(5-phospho-D-ribosyl)imidazole-4-carboxamide from 5-amino-1-(5-phospho-D-ribosyl)imidazole-4-carboxamide (10-formyl THF route): step 1/1. Its pathway is purine metabolism; IMP biosynthesis via de novo pathway; IMP from 5-formamido-1-(5-phospho-D-ribosyl)imidazole-4-carboxamide: step 1/1. This is Bifunctional purine biosynthesis protein PurH from Agrobacterium fabrum (strain C58 / ATCC 33970) (Agrobacterium tumefaciens (strain C58)).